The chain runs to 549 residues: Leiomodin-2 (549 aa).

A tropomyosin-binding region spans residues 1-42 (MSTFGYRRGLSKYESIDEDELLASLTAEELKELERELEDIEP). The interval 1–47 (MSTFGYRRGLSKYESIDEDELLASLTAEELKELERELEDIEPDRNLP) is interaction with tropomyosin alpha. Interaction with actin regions lie at residues 1 to 164 (MSTF…PDNS), 165 to 499 (KPKT…KEIK), and 523 to 542 (AHEN…LRRV). Phosphoserine is present on residues serine 11, serine 15, and serine 24. 4 disordered regions span residues 91-166 (KLAE…NSKP), 179-200 (TNGN…HPCG), 358-455 (MDKQ…PGKK), and 469-534 (ESAQ…IRGS). 2 stretches are compositionally biased toward acidic residues: residues 95–105 (EDKEESEEELI) and 113–143 (VSEE…EEVT). Polar residues-rich tracts occupy residues 150–163 (INGT…NPDN) and 179–192 (TNGN…NTES). The span at 358–376 (MDKQRQKRMQEQKQQEGHD) shows a compositional bias: basic and acidic residues. A compositionally biased stretch (polar residues) spans 390-401 (TPGSSPYASPRQ). Serine 406 carries the post-translational modification Phosphoserine. The segment covering 420–452 (PPSPVAPPPPPPPPPLPPHMLPPPPPPPAPPLP) has biased composition (pro residues). The stretch at 457–515 (ITRNIAEVIKQQESAQRALQNGQRKKKGKKVKKQPNNILKEIKNSLRSVQEKKMEESSR) forms a coiled coil. Residues 469–478 (ESAQRALQNG) are compositionally biased toward polar residues. Positions 479–489 (QRKKKGKKVKK) are enriched in basic residues. Residues 496–514 (KEIKNSLRSVQEKKMEESS) are compositionally biased toward basic and acidic residues. Residues 523–542 (AHENLMEAIRGSSIRQLRRV) enclose the WH2 domain.

This sequence belongs to the tropomodulin family. As to quaternary structure, can bind at least three actin monomers and thereby provides a nucleus for actin filament formation. Interacts (via N-terminus) with tropomyosin alpha (TPM1) (via N-terminus). May also interact with TPM2 (via N-terminus). Interacts with FLII.

It is found in the cytoplasm. The protein resides in the myofibril. The protein localises to the sarcomere. It localises to the m line. Its subcellular location is the cytoskeleton. Functionally, mediates nucleation of actin filaments and thereby promotes actin polymerization. Plays a role in the regulation of actin filament length. Required for normal sarcomere organization in the heart, and for normal heart function. The polypeptide is Leiomodin-2 (Lmod2) (Rattus norvegicus (Rat)).